A 344-amino-acid polypeptide reads, in one-letter code: Phenylalanine--tRNA ligase alpha subunit (344 aa).

Position 256 (Glu256) interacts with Mg(2+).

This sequence belongs to the class-II aminoacyl-tRNA synthetase family. Phe-tRNA synthetase alpha subunit type 1 subfamily. Tetramer of two alpha and two beta subunits. Requires Mg(2+) as cofactor.

It localises to the cytoplasm. It catalyses the reaction tRNA(Phe) + L-phenylalanine + ATP = L-phenylalanyl-tRNA(Phe) + AMP + diphosphate + H(+). This chain is Phenylalanine--tRNA ligase alpha subunit, found in Shouchella clausii (strain KSM-K16) (Alkalihalobacillus clausii).